A 1294-amino-acid chain; its full sequence is uncharacterized protein (1294 aa).

The Extracellular portion of the chain corresponds to 1 to 375; sequence MSQQENGDVA…RNFKLNFSDY (375 aa). The ABC transporter 1 domain occupies 28-287; that stretch reads LHVRDLSIVA…FESIGYHVPQ (260 aa). Asn41 carries an N-linked (GlcNAc...) asparagine glycan. Residue 62–69 participates in ATP binding; it reads GGSGSGKT. N-linked (GlcNAc...) asparagine glycosylation is found at Asn86, Asn101, Asn151, Asn341, Asn349, and Asn371. The chain crosses the membrane as a helical span at residues 376–396; that stretch reads VTLISTFAEPLIIGTVCGWIY. Over 397 to 495 the chain is Cytoplasmic; that stretch reads YKPDKSSIGG…EADARKFFYQ (99 aa). Residues 496–516 form a helical membrane-spanning segment; the sequence is FAVVFLCQLSCSGLSMLSVAV. Topologically, residues 517–530 are extracellular; that stretch reads SRDFSKASLVGNMT. The N-linked (GlcNAc...) asparagine glycan is linked to Asn528. The helical transmembrane segment at 531-551 threads the bilayer; that stretch reads FTVLSMGCGFFVNAKVMPVYV. Topologically, residues 552–604 are cytoplasmic; that stretch reads RWIKYIAFTWYSFGTLMSSTFTNSYCTTDNLDECLGNQILEVYGFPRNWITVP. A helical transmembrane segment spans residues 605 to 625; that stretch reads AVVLLCWSVGYFVVGAIILYL. Residues 626-1038 lie on the Extracellular side of the membrane; the sequence is HKIDITLQNE…TTTRRSFDSL (413 aa). The region spanning 679 to 941 is the ABC transporter 2 domain; the sequence is IKLEDIDLRV…FTELGYNCPS (263 aa). Position 727 to 734 (727 to 734) interacts with ATP; the sequence is GPSGSGKS. A glycan (N-linked (GlcNAc...) asparagine) is linked at Asn983. Residues 1039–1059 form a helical membrane-spanning segment; sequence MARIAQIPGLGVIFALFFAPV. Topologically, residues 1060 to 1120 are cytoplasmic; sequence KHNYTSISNR…PFFLAYMTLE (61 aa). Residues 1121 to 1141 form a helical membrane-spanning segment; that stretch reads LPLSALASVLYAVFTVLACGL. Topologically, residues 1142–1266 are extracellular; the sequence is PRTAGNFFAT…YGLVRNTQKY (125 aa). Residues 1267–1287 form a helical membrane-spanning segment; it reads LGIIVCVAIIYRLIAFFILKA. At 1288–1294 the chain is on the cytoplasmic side; sequence KLEWIKW.

It belongs to the ABC transporter superfamily. ABCG family. PDR (TC 3.A.1.205) subfamily.

It localises to the membrane. This is an uncharacterized protein from Saccharomyces cerevisiae (strain ATCC 204508 / S288c) (Baker's yeast).